Reading from the N-terminus, the 194-residue chain is Imidazoleglycerol-phosphate dehydratase (194 aa).

The protein belongs to the imidazoleglycerol-phosphate dehydratase family.

Its subcellular location is the cytoplasm. The enzyme catalyses D-erythro-1-(imidazol-4-yl)glycerol 3-phosphate = 3-(imidazol-4-yl)-2-oxopropyl phosphate + H2O. Its pathway is amino-acid biosynthesis; L-histidine biosynthesis; L-histidine from 5-phospho-alpha-D-ribose 1-diphosphate: step 6/9. This is Imidazoleglycerol-phosphate dehydratase from Bacillus licheniformis (strain ATCC 14580 / DSM 13 / JCM 2505 / CCUG 7422 / NBRC 12200 / NCIMB 9375 / NCTC 10341 / NRRL NRS-1264 / Gibson 46).